Consider the following 90-residue polypeptide: Molybdopterin synthase sulfur carrier subunit (90 aa).

Gly90 carries the 1-thioglycine; alternate modification. The residue at position 90 (Gly90) is a Glycyl adenylate; alternate.

Belongs to the MoaD family. MOCS2A subfamily. Heterotetramer; composed of 2 small (Mocs2A) and 2 large (Mocs2B) subunits. C-terminal thiocarboxylation occurs in 2 steps, it is first acyl-adenylated (-COAMP) via the hesA/moeB/thiF part of MOCS3, then thiocarboxylated (-COSH) via the rhodanese domain of MOCS3.

The protein localises to the cytoplasm. It functions in the pathway cofactor biosynthesis; molybdopterin biosynthesis. Functionally, acts as a sulfur carrier required for molybdopterin biosynthesis. Component of the molybdopterin synthase complex that catalyzes the conversion of precursor Z into molybdopterin by mediating the incorporation of 2 sulfur atoms into precursor Z to generate a dithiolene group. In the complex, serves as sulfur donor by being thiocarboxylated (-COSH) at its C-terminus by MOCS3. After interaction with Mocs2B, the sulfur is then transferred to precursor Z to form molybdopterin. This Drosophila ananassae (Fruit fly) protein is Molybdopterin synthase sulfur carrier subunit.